The primary structure comprises 179 residues: Segregation and condensation protein B (179 aa).

It belongs to the ScpB family. Homodimer. Homodimerization may be required to stabilize the binding of ScpA to the Smc head domains. Component of a cohesin-like complex composed of ScpA, ScpB and the Smc homodimer, in which ScpA and ScpB bind to the head domain of Smc. The presence of the three proteins is required for the association of the complex with DNA.

The protein localises to the cytoplasm. In terms of biological role, participates in chromosomal partition during cell division. May act via the formation of a condensin-like complex containing Smc and ScpA that pull DNA away from mid-cell into both cell halves. In Clostridioides difficile (strain 630) (Peptoclostridium difficile), this protein is Segregation and condensation protein B.